A 573-amino-acid chain; its full sequence is Sulfite oxidase, mitochondrial (573 aa).

Residues M1 to S34 constitute a mitochondrion transit peptide. A compositionally biased stretch (basic residues) spans G14–L26. The tract at residues G14–G50 is disordered. The region spanning L108–E186 is the Cytochrome b5 heme-binding domain. Positions 144 and 168 each coordinate heme b. Residues V190–S199 form a hinge region. Residues P200–K423 form a moco domain region. Mo-molybdopterin contacts are provided by residues Y240–H244, C287, D344, H383, R388, and N399–K401. The interval G424–K567 is homodimerization.

It depends on heme b as a cofactor. Mo-molybdopterin serves as cofactor. Expressed in the ensheathing glia with relatively weak expression in the CNS cortex (at protein level).

It localises to the mitochondrion intermembrane space. The catalysed reaction is sulfite + O2 + H2O = sulfate + H2O2. It participates in energy metabolism; sulfur metabolism. Required in ensheathing glial cells for normal larval locomotion. Oxidizes sulfite which is required to maintain glutamate homeostasis and as a consequence, neuronal network function. This chain is Sulfite oxidase, mitochondrial, found in Drosophila melanogaster (Fruit fly).